Consider the following 205-residue polypeptide: MRSPYLIGVFLAAGKSRRMGQNKLALPLKGENIGSLSLKTALSSRLDHVLVVERTEHASLEWIGAPYHAPPFQKRWSLHVCQDAEKGQGHSVSSGVRKAESMGADGIVILLADQPQLSVDHLNALVALAPESFAVSSFLGAFTPPIYFSSTCFPYVKGLKGDEGARRLLKSGQLGAGAVLEAKDSGELDDIDTPEEYDMVRRAMS.

It functions in the pathway purine metabolism; hypoxanthine degradation. Functionally, required for xanthine dehydrogenase activity. Could be involved in formation of the molybdenum cofactor required by xanthine dehydrogenase. This Bacillus subtilis (strain 168) protein is Purine catabolism protein PucB (pucB).